We begin with the raw amino-acid sequence, 378 residues long: Erythronate-4-phosphate dehydrogenase (378 aa).

Residues Ser45 and Thr66 each coordinate substrate. Residues Asp146 and Thr175 each contribute to the NAD(+) site. Arg208 is a catalytic residue. Asp232 provides a ligand contact to NAD(+). The active site involves Glu237. His254 (proton donor) is an active-site residue. Gly257 contacts NAD(+). Tyr258 is a substrate binding site.

Belongs to the D-isomer specific 2-hydroxyacid dehydrogenase family. PdxB subfamily. In terms of assembly, homodimer.

The protein resides in the cytoplasm. It catalyses the reaction 4-phospho-D-erythronate + NAD(+) = (R)-3-hydroxy-2-oxo-4-phosphooxybutanoate + NADH + H(+). It participates in cofactor biosynthesis; pyridoxine 5'-phosphate biosynthesis; pyridoxine 5'-phosphate from D-erythrose 4-phosphate: step 2/5. Its function is as follows. Catalyzes the oxidation of erythronate-4-phosphate to 3-hydroxy-2-oxo-4-phosphonooxybutanoate. This chain is Erythronate-4-phosphate dehydrogenase, found in Shigella flexneri serotype 5b (strain 8401).